A 432-amino-acid polypeptide reads, in one-letter code: Adenylosuccinate synthetase (432 aa).

GTP contacts are provided by residues Gly12–Lys18 and Gly40–Thr42. Asp13 functions as the Proton acceptor in the catalytic mechanism. The Mg(2+) site is built by Asp13 and Gly40. IMP is bound by residues Asp13–Lys16, Asn38–His41, Thr132, Arg146, Gln226, Thr241, and Arg305. The active-site Proton donor is His41. A substrate-binding site is contributed by Val301–Arg307. GTP is bound by residues Arg307, Lys333–Asp335, and Ser415–Ser417.

The protein belongs to the adenylosuccinate synthetase family. As to quaternary structure, homodimer. Mg(2+) is required as a cofactor.

It is found in the cytoplasm. It catalyses the reaction IMP + L-aspartate + GTP = N(6)-(1,2-dicarboxyethyl)-AMP + GDP + phosphate + 2 H(+). It functions in the pathway purine metabolism; AMP biosynthesis via de novo pathway; AMP from IMP: step 1/2. Plays an important role in the de novo pathway of purine nucleotide biosynthesis. Catalyzes the first committed step in the biosynthesis of AMP from IMP. The polypeptide is Adenylosuccinate synthetase (Rhizobium leguminosarum bv. trifolii (strain WSM2304)).